Here is a 612-residue protein sequence, read N- to C-terminus: Transcription factor ffsR (612 aa).

Residues M1–E12 are compositionally biased toward polar residues. Residues M1–S21 form a disordered region. Positions C28 to C60 form a DNA-binding region, zn(2)-C6 fungal-type. Over residues E73–H82 the composition is skewed to basic and acidic residues. Disordered stretches follow at residues E73–G130, D154–S249, and G451–N470. Polar residues-rich tracts occupy residues S92–A103, D154–S169, and L238–S249. Residues P458–N470 are compositionally biased toward low complexity.

The protein localises to the nucleus. In terms of biological role, transcription factor that specifically regulates the expression of the gene cluster that mediates the biosynthesis of the cytotoxic leucine-containing cytochalasans, including aspochalasin C, aspochalasin E, TMC-169, flavichalasine F, aspergillin PZ, aspochalasin M and flavichalasine G. The polypeptide is Transcription factor ffsR (Aspergillus flavipes).